The following is a 61-amino-acid chain: Photosystem II reaction center protein K (61 aa).

Positions 1 to 24 are excised as a propeptide; the sequence is MLNIFNLVCICIHSVLYSSSFFSA. Residues 36–56 form a helical membrane-spanning segment; it reads IVDIMPVIPLLFFLLAFVWQA.

The protein belongs to the PsbK family. In terms of assembly, PSII is composed of 1 copy each of membrane proteins PsbA, PsbB, PsbC, PsbD, PsbE, PsbF, PsbH, PsbI, PsbJ, PsbK, PsbL, PsbM, PsbT, PsbX, PsbY, PsbZ, Psb30/Ycf12, at least 3 peripheral proteins of the oxygen-evolving complex and a large number of cofactors. It forms dimeric complexes.

Its subcellular location is the plastid. It localises to the chloroplast thylakoid membrane. One of the components of the core complex of photosystem II (PSII). PSII is a light-driven water:plastoquinone oxidoreductase that uses light energy to abstract electrons from H(2)O, generating O(2) and a proton gradient subsequently used for ATP formation. It consists of a core antenna complex that captures photons, and an electron transfer chain that converts photonic excitation into a charge separation. This chain is Photosystem II reaction center protein K, found in Glycine max (Soybean).